The chain runs to 122 residues: Small ribosomal subunit protein uS12 (122 aa).

Belongs to the universal ribosomal protein uS12 family. As to quaternary structure, part of the 30S ribosomal subunit. Contacts proteins S8 and S17. May interact with IF1 in the 30S initiation complex.

With S4 and S5 plays an important role in translational accuracy. Functionally, interacts with and stabilizes bases of the 16S rRNA that are involved in tRNA selection in the A site and with the mRNA backbone. Located at the interface of the 30S and 50S subunits, it traverses the body of the 30S subunit contacting proteins on the other side and probably holding the rRNA structure together. The combined cluster of proteins S8, S12 and S17 appears to hold together the shoulder and platform of the 30S subunit. The polypeptide is Small ribosomal subunit protein uS12 (Corynebacterium efficiens (strain DSM 44549 / YS-314 / AJ 12310 / JCM 11189 / NBRC 100395)).